The primary structure comprises 391 residues: Aspartate aminotransferase (391 aa).

Residues glycine 40 and asparagine 176 each contribute to the L-aspartate site. N6-(pyridoxal phosphate)lysine is present on lysine 236. Arginine 366 contributes to the L-aspartate binding site.

This sequence belongs to the class-I pyridoxal-phosphate-dependent aminotransferase family. In terms of assembly, homodimer. Pyridoxal 5'-phosphate serves as cofactor.

The protein resides in the cytoplasm. The catalysed reaction is L-aspartate + 2-oxoglutarate = oxaloacetate + L-glutamate. This chain is Aspartate aminotransferase (aspC), found in Pyrococcus horikoshii (strain ATCC 700860 / DSM 12428 / JCM 9974 / NBRC 100139 / OT-3).